The following is a 317-amino-acid chain: Acetyl-coenzyme A carboxylase carboxyl transferase subunit beta (317 aa).

The segment at 1 to 28 is disordered; sequence MANNMTDTMTKFDTNNDSASLQQNGNKA. Residues 55–317 form the CoA carboxyltransferase N-terminal domain; sequence PSTKCSSCHS…LCSVPNVDAQ (263 aa). Residues Cys-59, Cys-62, Cys-78, and Cys-81 each contribute to the Zn(2+) site. The segment at 59–81 adopts a C4-type zinc-finger fold; the sequence is CSSCHSVITNTALIFNCYVCPHC.

It belongs to the AccD/PCCB family. Acetyl-CoA carboxylase is a heterohexamer composed of biotin carboxyl carrier protein (AccB), biotin carboxylase (AccC) and two subunits each of ACCase subunit alpha (AccA) and ACCase subunit beta (AccD). Zn(2+) serves as cofactor.

The protein localises to the cytoplasm. It carries out the reaction N(6)-carboxybiotinyl-L-lysyl-[protein] + acetyl-CoA = N(6)-biotinyl-L-lysyl-[protein] + malonyl-CoA. It participates in lipid metabolism; malonyl-CoA biosynthesis; malonyl-CoA from acetyl-CoA: step 1/1. In terms of biological role, component of the acetyl coenzyme A carboxylase (ACC) complex. Biotin carboxylase (BC) catalyzes the carboxylation of biotin on its carrier protein (BCCP) and then the CO(2) group is transferred by the transcarboxylase to acetyl-CoA to form malonyl-CoA. The protein is Acetyl-coenzyme A carboxylase carboxyl transferase subunit beta of Psychrobacter arcticus (strain DSM 17307 / VKM B-2377 / 273-4).